The primary structure comprises 117 residues: MVEMESAKSVLEPLAWLMQMITGLLMILLVTAHFYVTHMTTHDALRYAEVVERVAQPEFKALYALLLLAVSFHAFNGLRAILLDTNAGMRKKGAVSALTTLAFLLAFFYGLYLLFSI.

At 1–15 the chain is on the cytoplasmic side; the sequence is MVEMESAKSVLEPLA. Residues 16-36 traverse the membrane as a helical segment; the sequence is WLMQMITGLLMILLVTAHFYV. The Extracellular portion of the chain corresponds to 37 to 61; it reads THMTTHDALRYAEVVERVAQPEFKA. Residues 62–82 form a helical membrane-spanning segment; that stretch reads LYALLLLAVSFHAFNGLRAIL. A heme-binding site is contributed by histidine 73. Residues 83–92 are Cytoplasmic-facing; it reads LDTNAGMRKK. A helical membrane pass occupies residues 93–115; sequence GAVSALTTLAFLLAFFYGLYLLF.

As to quaternary structure, part of an enzyme complex containing four subunits: a flavoprotein, an iron-sulfur protein, plus two membrane-anchoring proteins, SdhC and SdhD. It depends on heme as a cofactor.

It localises to the cell membrane. The protein operates within carbohydrate metabolism; tricarboxylic acid cycle. In terms of biological role, membrane-anchoring subunit of succinate dehydrogenase (SDH). The sequence is that of Succinate dehydrogenase hydrophobic membrane anchor subunit (sdhD) from Archaeoglobus fulgidus (strain ATCC 49558 / DSM 4304 / JCM 9628 / NBRC 100126 / VC-16).